The primary structure comprises 466 residues: Tissue alpha-L-fucosidase (466 aa).

Residues 1–31 (MRAPGMRSRPAGPALLLLLLFLGAAESVRRA) form the signal peptide. Thr-170 bears the Phosphothreonine mark. N-linked (GlcNAc...) asparagine glycosylation is found at Asn-241, Asn-268, and Asn-382.

It belongs to the glycosyl hydrolase 29 family. In terms of assembly, homotetramer.

The protein localises to the lysosome. The enzyme catalyses an alpha-L-fucoside + H2O = L-fucose + an alcohol. It carries out the reaction a neolactoside IV(2)-alpha-Fuc-nLc4Cer(d18:1(4E)) + H2O = a neolactoside nLc4Cer(d18:1(4E)) + L-fucose. It catalyses the reaction a neolactoside IV(2)-alpha-Fuc-nLc4Cer(d18:0) + H2O = a neolactoside nLc4Cer(d18:0) + L-fucose. In terms of biological role, alpha-L-fucosidase is responsible for hydrolyzing the alpha-1,6-linked fucose joined to the reducing-end N-acetylglucosamine of the carbohydrate moieties of glycoproteins. The sequence is that of Tissue alpha-L-fucosidase from Homo sapiens (Human).